A 556-amino-acid chain; its full sequence is 2-succinyl-5-enolpyruvyl-6-hydroxy-3-cyclohexene-1-carboxylate synthase (556 aa).

This sequence belongs to the TPP enzyme family. MenD subfamily. As to quaternary structure, homodimer. Mg(2+) serves as cofactor. The cofactor is Mn(2+). Thiamine diphosphate is required as a cofactor.

The catalysed reaction is isochorismate + 2-oxoglutarate + H(+) = 5-enolpyruvoyl-6-hydroxy-2-succinyl-cyclohex-3-ene-1-carboxylate + CO2. It functions in the pathway quinol/quinone metabolism; 1,4-dihydroxy-2-naphthoate biosynthesis; 1,4-dihydroxy-2-naphthoate from chorismate: step 2/7. Its pathway is quinol/quinone metabolism; menaquinone biosynthesis. Catalyzes the thiamine diphosphate-dependent decarboxylation of 2-oxoglutarate and the subsequent addition of the resulting succinic semialdehyde-thiamine pyrophosphate anion to isochorismate to yield 2-succinyl-5-enolpyruvyl-6-hydroxy-3-cyclohexene-1-carboxylate (SEPHCHC). The protein is 2-succinyl-5-enolpyruvyl-6-hydroxy-3-cyclohexene-1-carboxylate synthase of Escherichia coli O17:K52:H18 (strain UMN026 / ExPEC).